Here is a 910-residue protein sequence, read N- to C-terminus: Staphylococcal nuclease domain-containing protein 1 (910 aa).

The residue at position 2 (alanine 2) is an N-acetylalanine. 3 TNase-like domains span residues 18–166, 193–328, and 341–496; these read TVQR…MWSE, KPVN…IWRD, and KQFV…LHSK. Threonine 103 carries the post-translational modification Phosphothreonine. N6-acetyllysine is present on lysine 193. Phosphothreonine is present on residues threonine 235 and threonine 240. Short sequence motifs (nuclear localization signal) lie at residues 321-325 and 388-392; these read RRLRI and KKLRP. Phosphoserine is present on serine 426. Lysine 513 is covalently cross-linked (Glycyl lysine isopeptide (Lys-Gly) (interchain with G-Cter in SUMO2)). A TNase-like 4 domain is found at 525–660; it reads GRSEAVVEYV…KQRKEKVWAH (136 aa). Lysine 641 carries the post-translational modification N6-acetyllysine. Serine 645 carries the post-translational modification Phosphoserine. One can recognise a Tudor domain in the interval 729–787; sequence APRRGEFCIAKFVDGEWYRARVEKVESPAKVHVFYIDYGNREILPSTRLGTLPPAFSTR. Threonine 779 carries the phosphothreonine modification. A phosphoserine mark is found at serine 785 and serine 909.

In terms of assembly, forms a ternary complex with STAT6 and POLR2A. Associates with the RNA-induced silencing complex (RISC). Interacts with the RISC components AGO2, FMR1 and TNRC6A. Interacts with GTF2E1 and GTF2E2. Interacts with PIM1. Interacts with STAT5. Interacts with SYT11 (via C2 2 domain); the interaction with SYT11 is direct. Phosphorylated by PIM1 in vitro.

It localises to the cytoplasm. Its subcellular location is the nucleus. The protein localises to the melanosome. The enzyme catalyses Endonucleolytic cleavage to nucleoside 3'-phosphates and 3'-phosphooligonucleotide end-products.. Functionally, endonuclease that mediates miRNA decay of both protein-free and AGO2-loaded miRNAs. As part of its function in miRNA decay, regulates mRNAs involved in G1-to-S phase transition. Functions as a bridging factor between STAT6 and the basal transcription factor. Plays a role in PIM1 regulation of MYB activity. Functions as a transcriptional coactivator for STAT5. In Mus musculus (Mouse), this protein is Staphylococcal nuclease domain-containing protein 1 (Snd1).